A 596-amino-acid chain; its full sequence is Probable protein phosphatase 2C 26 (596 aa).

Residues 122–154 (SGPLDPAVPFSGPLPAKPPKPASSSSRGFSRRF) form a disordered region. The PPM-type phosphatase domain maps to 177–584 (LRRDDGVQWA…DDVTVMVISL (408 aa)). Asp212, Gly213, Asp512, and Asp575 together coordinate Mn(2+).

Belongs to the PP2C family. Mg(2+) serves as cofactor. The cofactor is Mn(2+).

The catalysed reaction is O-phospho-L-seryl-[protein] + H2O = L-seryl-[protein] + phosphate. It catalyses the reaction O-phospho-L-threonyl-[protein] + H2O = L-threonyl-[protein] + phosphate. The polypeptide is Probable protein phosphatase 2C 26 (Oryza sativa subsp. japonica (Rice)).